Here is a 918-residue protein sequence, read N- to C-terminus: Cell cycle and apoptosis regulator protein 2 (918 aa).

The tract at residues 1 to 35 is disordered; the sequence is MSQFKRQRINPLPGGRNFSGTASTSLLGPPPGLLT. Residue threonine 35 is modified to Phosphothreonine. Residue lysine 112 is modified to N6-acetyllysine; by KAT8. Lysine 123 bears the N6-methyllysine mark. A Phosphoserine modification is found at serine 124. Disordered regions lie at residues 179 to 219, 446 to 510, and 568 to 637; these read NRFP…KPRH, KAAE…PAVI, and VSPP…ASED. At arginine 180 the chain carries Omega-N-methylarginine. Residue lysine 215 is modified to N6-acetyllysine; by KAT8. 2 stretches are compositionally biased toward low complexity: residues 447–468 and 482–492; these read AAEAAPPTQEAPGETEPTEQAP and AETPEATTQQE. Threonine 454 bears the Phosphothreonine; by ATM, ATR and CK2 mark. Phosphothreonine is present on threonine 484. Serine 569 bears the Phosphoserine mark. Basic and acidic residues predominate over residues 572–597; sequence EPEKEEAAKEEEAIKEEVVKEPKDEA. Residue lysine 586 forms a Glycyl lysine isopeptide (Lys-Gly) (interchain with G-Cter in SUMO2 and SUMO3); alternate linkage. Lysine 586 is covalently cross-linked (Glycyl lysine isopeptide (Lys-Gly) (interchain with G-Cter in SUMO2); alternate). An interaction with MCC region spans residues 605–665; sequence ESEAPLKEDG…EEFAGAKLED (61 aa). 6 positions are modified to phosphoserine: serine 622, serine 670, serine 673, serine 676, serine 682, and serine 803. Residues 699-918 form an interaction with NR1D1 region; that stretch reads DCLLAFVFFD…VEKEEPAPSN (220 aa). The stretch at 824 to 904 forms a coiled coil; that stretch reads LENRIHTLEL…QLEIQRVVEK (81 aa). At threonine 892 the chain carries Phosphothreonine.

As to quaternary structure, component of the DBIRD complex. Interacts with ZNF326/ZIRD; the interaction is direct. Interacts (via N-terminus) with SIRT1, which inhibits the deacetylation of substrates. Interacts (via N-terminus) with SUV39H1; this interaction abolishes the interaction with SIRT1. Component of a nuclear receptor-mediated transcription complex composed of at least ZNF335, CCAR2 and EMSY; the complex stimulates the transcription of nuclear receptor target genes such as SOX9 and HOXA1. Within the complex interacts with EMSY and interacts with ZNF335 (via C-terminus). Components of this complex may associate with components of a histone methylation complex to form a complex at least composed of ZNF335, HCFC1, CCAR2, EMSY, MKI67, RBBP5, ASH2L and WDR5. Within this complex, interacts with ASH2L. Interacts with NR1D1. Interacts (via N-terminus) with ESR1 and ESR2. Interacts (via N-terminus) with HDAC3 (via C-terminus). Interacts with HDAC1 and MED2F. Interacts with MCC. Interacts (via N-terminus) with NR1H2 and NR1H3 in a ligand-independent manner. Interacts with CSNK2A1. Interacts (via N-terminus) with p53/TP53. Interacts (via N-terminus) with BRCA1 (via the BRCT domains). Interacts (via N-terminus) with CHEK2 (via protein kinase domain). Interacts with PSEM3. Interacts (via N-terminus) with PSIA3 and SENP1. The sumoylated form shows a preferential interaction with SIRT1 as compared to its unmodified form. Interacts with CECR2; may form part of the CERF-1 and/or CEF-5 ISWI chromatin remodeling complexes in embryonic stem cells. Post-translationally, ATM/ATR-mediated phosphorylation at Thr-454 upon DNA damage promotes binding to SIRT1. Phosphorylation at Thr-454 promotes its sumoylation by switching the binding partner of CCAR2 from SENP1 to PIAS3. Acetylation at Lys-112 and Lys-215 by KAT8 prevents inhibitory binding to SIRT1 and increases its deacetylase activity. In terms of processing, genotoxic stress induces its sumoylation and sumoylation promotes the SIRT1-CCAR2 interaction which in turn inhibits SIRT1-mediated deacetylation of p53/TP53. Sumoylation leads to transcriptional activation of p53/TP53 by sequestering SIRT1 from p53/TP53. Desumoylated by SENP1.

The protein resides in the nucleus. The protein localises to the cytoplasm. It localises to the cytoskeleton. It is found in the spindle. Its function is as follows. Core component of the DBIRD complex, a multiprotein complex that acts at the interface between core mRNP particles and RNA polymerase II (RNAPII) and integrates transcript elongation with the regulation of alternative splicing: the DBIRD complex affects local transcript elongation rates and alternative splicing of a large set of exons embedded in (A + T)-rich DNA regions. Inhibits SIRT1 deacetylase activity leading to increasing levels of p53/TP53 acetylation and p53-mediated apoptosis. Inhibits SUV39H1 methyltransferase activity. Mediates ligand-dependent transcriptional activation by nuclear hormone receptors. Plays a critical role in maintaining genomic stability and cellular integrity following UV-induced genotoxic stress. Regulates the circadian expression of the core clock components NR1D1 and BMAL1. Enhances the transcriptional repressor activity of NR1D1 through stabilization of NR1D1 protein levels by preventing its ubiquitination and subsequent degradation. Represses the ligand-dependent transcriptional activation function of ESR2. Acts as a regulator of PCK1 expression and gluconeogenesis by a mechanism that involves, at least in part, both NR1D1 and SIRT1. Negatively regulates the deacetylase activity of HDAC3 and can alter its subcellular localization. Positively regulates the beta-catenin pathway (canonical Wnt signaling pathway) and is required for MCC-mediated repression of the beta-catenin pathway. Represses ligand-dependent transcriptional activation function of NR1H2 and NR1H3 and inhibits the interaction of SIRT1 with NR1H3. Plays an important role in tumor suppression through p53/TP53 regulation; stabilizes p53/TP53 by affecting its interaction with ubiquitin ligase MDM2. Represses the transcriptional activator activity of BRCA1. Inhibits SIRT1 in a CHEK2 and PSEM3-dependent manner and inhibits the activity of CHEK2 in vitro. This is Cell cycle and apoptosis regulator protein 2 (CCAR2) from Pongo abelii (Sumatran orangutan).